The following is a 161-amino-acid chain: 2-C-methyl-D-erythritol 2,4-cyclodiphosphate synthase (161 aa).

A divalent metal cation-binding residues include Asp14 and His16. 4-CDP-2-C-methyl-D-erythritol 2-phosphate contacts are provided by residues 14-16 (DVH) and 40-41 (HS). A divalent metal cation is bound at residue His48. Residues 62-64 (DLG), Phe142, and Arg145 contribute to the 4-CDP-2-C-methyl-D-erythritol 2-phosphate site.

This sequence belongs to the IspF family. As to quaternary structure, homotrimer. The cofactor is a divalent metal cation.

The catalysed reaction is 4-CDP-2-C-methyl-D-erythritol 2-phosphate = 2-C-methyl-D-erythritol 2,4-cyclic diphosphate + CMP. It participates in isoprenoid biosynthesis; isopentenyl diphosphate biosynthesis via DXP pathway; isopentenyl diphosphate from 1-deoxy-D-xylulose 5-phosphate: step 4/6. Its function is as follows. Involved in the biosynthesis of isopentenyl diphosphate (IPP) and dimethylallyl diphosphate (DMAPP), two major building blocks of isoprenoid compounds. Catalyzes the conversion of 4-diphosphocytidyl-2-C-methyl-D-erythritol 2-phosphate (CDP-ME2P) to 2-C-methyl-D-erythritol 2,4-cyclodiphosphate (ME-CPP) with a corresponding release of cytidine 5-monophosphate (CMP). The protein is 2-C-methyl-D-erythritol 2,4-cyclodiphosphate synthase of Acidothermus cellulolyticus (strain ATCC 43068 / DSM 8971 / 11B).